Reading from the N-terminus, the 593-residue chain is Tyrosine-protein phosphatase non-receptor type 9 (593 aa).

M1 carries the N-acetylmethionine modification. The segment at 1–20 (MEPATAPRPDMAPELTPEEE) is disordered. The CRAL-TRIO domain occupies 84 to 243 (EEPLRSEILS…NLGGYVKIDL (160 aa)). The 272-residue stretch at 303 to 574 (IYEEYEDIRR…YFCYKAILEF (272 aa)) folds into the Tyrosine-protein phosphatase domain. The Phosphocysteine intermediate role is filled by C515.

Belongs to the protein-tyrosine phosphatase family. Non-receptor class 3 subfamily.

It localises to the cytoplasm. The enzyme catalyses O-phospho-L-tyrosyl-[protein] + H2O = L-tyrosyl-[protein] + phosphate. In terms of biological role, protein-tyrosine phosphatase that could participate in the transfer of hydrophobic ligands or in functions of the Golgi apparatus. The chain is Tyrosine-protein phosphatase non-receptor type 9 (Ptpn9) from Mus musculus (Mouse).